We begin with the raw amino-acid sequence, 501 residues long: MDSFNPALPSIVESLDDIYKNFENNKKRYEELNETFSKIYNGDKPIFYFRAPGRVNLIGEHVDYSGYCVLPFALEQDTIVAVSFNKLNNDIINIHNCNEKYTPKSIDVSGGGDIEIDMKRHHWTNYVLAAWKGVSQAMEKGGKLKSVNLLYSGNVPMGAGVSSSSALVCVSTLAISYCNNLILNKEELAQLSIKSERYVGVESGGMDQSISFLAEQNTAKLIEFHPSLKTFDVQLPKGVSFVICNSLVDSLKVVTGATNYNLRVVECRLAAVLLAFHCGLSWEKVRRLRDVQYQGNFDLPQLIQLTEQHLSEKQTYTREEVATILDISVEQLVKTYFPSGITVQSEHFELYKRARHVFTETQRVYKFSEICKQQSNFNNNNNNNNNNSSNNTNIIQELGKLMNESHESCSKLFECSCSELDSLTKICRENGALGSRLTGAGWGGCVISLVPNSKVDSFLDAIDTHYYSKFVNPEKLKNIEKSSYSFFTTPCKGACIVSSTV.

Residues R54, E60, H61, and D63 each coordinate alpha-D-galactose. Residues G158, G160, S162, and S163 each contribute to the ATP site. D207 is a binding site for alpha-D-galactose. D207 serves as the catalytic Proton acceptor. ATP-binding residues include S250 and K252. Y260 lines the alpha-D-galactose pocket.

It belongs to the GHMP kinase family. GalK subfamily.

The catalysed reaction is alpha-D-galactose + ATP = alpha-D-galactose 1-phosphate + ADP + H(+). It functions in the pathway carbohydrate metabolism; galactose metabolism. This is Galactokinase (galK) from Dictyostelium discoideum (Social amoeba).